The sequence spans 260 residues: Lys-63-specific deubiquitinase BRCC36 (260 aa).

The 144-residue stretch at 6 to 149 folds into the MPN domain; it reads VHLESDAFLV…YTCFQSVQAQ (144 aa). Zn(2+) is bound by residues His92, His94, and Asp105. The JAMM motif motif lies at 92 to 105; it reads HSHPHITVWPSHVD.

The protein belongs to the peptidase M67A family. BRCC36 subfamily. In terms of assembly, component of the BRCA1-A complex, at least composed of brca1, bard1, uimc1/rap80, abraxas1, brcc3/brcc36, babam2 and babam1/nba1. In the BRCA1-A complex, interacts directly with abraxas1 and babam2. Component of the BRISC complex, at least composed of abraxas2, brcc3/brcc36, babam2 and babam1/nba1. Within the complex, interacts directly with abraxas2. Both the BRCA1-A complex and the BRISC complex bind polyubiquitin. It depends on Zn(2+) as a cofactor.

It is found in the nucleus. Its subcellular location is the cytoplasm. The protein localises to the cytoskeleton. It localises to the spindle pole. In terms of biological role, metalloprotease that specifically cleaves 'Lys-63'-linked polyubiquitin chains. Does not have activity toward 'Lys-48'-linked polyubiquitin chains. Component of the BRCA1-A complex, a complex that specifically recognizes 'Lys-63'-linked ubiquitinated histones H2A and H2AX at DNA lesions sites, leading to target the brca1-bard1 heterodimer to sites of DNA damage at double-strand breaks (DSBs). In the BRCA1-A complex, it specifically removes 'Lys-63'-linked ubiquitin on histones H2A and H2AX, antagonizing the rnf8-dependent ubiquitination at double-strand breaks (DSBs). Catalytic subunit of the BRISC complex, a multiprotein complex that specifically cleaves 'Lys-63'-linked ubiquitin in various substrates. Mediates the specific 'Lys-63'-specific deubiquitination associated with the COP9 signalosome complex (CSN), via the interaction of the BRISC complex with the CSN complex. The BRISC complex is required for normal mitotic spindle assembly and microtubule attachment to kinetochores via its role in deubiquitinating numa1. Plays a role in interferon signaling via its role in the deubiquitination of the interferon receptor ifnar1; deubiquitination increases ifnar1 activity by enhancing its stability and cell surface expression. Acts as a regulator of the NLRP3 inflammasome by mediating deubiquitination of nlrp3. Down-regulates the response to bacterial lipopolysaccharide (LPS) via its role in ifnar1 deubiquitination. The sequence is that of Lys-63-specific deubiquitinase BRCC36 (brcc3) from Salmo salar (Atlantic salmon).